The primary structure comprises 478 residues: ATP synthase subunit beta (478 aa).

160 to 167 (GGAGVGKT) lines the ATP pocket.

It belongs to the ATPase alpha/beta chains family. In terms of assembly, F-type ATPases have 2 components, CF(1) - the catalytic core - and CF(0) - the membrane proton channel. CF(1) has five subunits: alpha(3), beta(3), gamma(1), delta(1), epsilon(1). CF(0) has three main subunits: a(1), b(2) and c(9-12). The alpha and beta chains form an alternating ring which encloses part of the gamma chain. CF(1) is attached to CF(0) by a central stalk formed by the gamma and epsilon chains, while a peripheral stalk is formed by the delta and b chains.

The protein resides in the cell inner membrane. It catalyses the reaction ATP + H2O + 4 H(+)(in) = ADP + phosphate + 5 H(+)(out). Functionally, produces ATP from ADP in the presence of a proton gradient across the membrane. The catalytic sites are hosted primarily by the beta subunits. The protein is ATP synthase subunit beta of Orientia tsutsugamushi (strain Boryong) (Rickettsia tsutsugamushi).